The following is a 1391-amino-acid chain: MEVLMAERADLVFHNKVIDGTAMKRLISRLIDHFGMAYTSHILDQVKTLGFQQATATSISLGIDDLLTTPSKRWLVQDAEQQSFILEKHHHYGNVHAVEKLRQSIEIWYATSEYLRQEMNTNFRMTDPSNPVHIMSFSGARGNPSQVHQLVGMRGLMSDPQGQMIDLPIQSNLREGLSLTEYIISCYGARKGVVDTAVRTSDAGYLTRRLVEVVQHIVVRRTDCGTIRGIYVTSRNGMMTERIFIQTLIGRVLADDIYMGPRCIATRNQDVGIELVNRFITFRAQPISIRTPFTCRSTSWICRLCYGRSPTHGDLVELGEAVGIIAGQSIGEPGTQLTLRTFHTGGVFTGGTAEHVRAPFNGKIKFNEDLVHPTRTRHGHPAFLCYIDLYVTIESQDIIHNVNIPQKSFLLVQNNQYVESEQVIAEIRAETSTFNFKERVRKHIYSDSEGEMHWSTDVYHAPEYTYGNVHLLPKTSHLWVLSGGPCRSRIVPFSLHKDQDQMNVHSLSAERRYISNLSATNDQVRHKLFSSDPSGKRGGSILDYSGPNRIICNGHLNFIYPTILHENSDLLAKRRRNRFILPLQSNQEREKELMPCSGISIEIPINGIFRRNSILAYFDDPLYRRKSSGITKYGTIEVHSIVKKEDLIEYRGAKEFRSKYQMKVDRFFFIPEEVHILPGSSYIMVRNNSIIGVDTRITLNIRSRVGGLVRVERKKKNIELKIFSGDIHFPGETDKISRHSGILIPPGTEKKKSKESKKKLKNWIYVQRITPTKKKYFVLVRPVVTYEIADGINLVTLFPQDLLQERDDVQLRVVNYILYENGKPIRGISDTSIQLVRTCLVLNCDQYKNGSSMEEIHASFVEVRTNGLIRYFLRMDLVKSPISYIVKRNDPSSSGLIPDNGSDRNNINPFYSIYYKARIQQSLSQHQGTIRTLLNRNKECQSLIILSSSNCSRMHPFNGLKYHNVTKESSKGDPLIPIKNWLGPLGTVPKIANFYSFYHLITHNQILVNKYLILNNLKQIFQVLKYYLMDENGRIYNPDRCRNIIFNPFNFNWYFLHHDYCEETSTIISPGQFICENVCISKNGPHLKSGQVLIVHIDSLVIRSAKPYLATPGATVHGHYGEILYEGDTLVTFIYEKSRSGDITQGLPKVEQVLEVRSIDSISMNLEKRVEGWNERIPRILGIPWGFLIGAELTIAQSRISLVNKIQKVYRSQGVQIHNRHIEIIVRQITSKVLVSEEGMSNVFSPGELIGLLRAERTGRALEEAICYRAVLLGITRASLNTQSFISEASFQETARVLAKAALRGRIDWLKGLKENVVLGGLIPVGTGFKVLVHRSRQHNNIPLETKKKNIFEGEMRDILFHHRKFKLLNYCIPKNFHDTPEQSFTGFNDS.

Zn(2+) is bound by residues cysteine 224, cysteine 295, cysteine 302, and cysteine 305.

The protein belongs to the RNA polymerase beta' chain family. RpoC2 subfamily. In terms of assembly, in plastids the minimal PEP RNA polymerase catalytic core is composed of four subunits: alpha, beta, beta', and beta''. When a (nuclear-encoded) sigma factor is associated with the core the holoenzyme is formed, which can initiate transcription. It depends on Zn(2+) as a cofactor.

It localises to the plastid. The protein localises to the chloroplast. The enzyme catalyses RNA(n) + a ribonucleoside 5'-triphosphate = RNA(n+1) + diphosphate. DNA-dependent RNA polymerase catalyzes the transcription of DNA into RNA using the four ribonucleoside triphosphates as substrates. This is DNA-directed RNA polymerase subunit beta'' from Buxus microphylla (Littleleaf boxwood).